The chain runs to 490 residues: ATP synthase subunit beta, plastid (490 aa).

170–177 is an ATP binding site; it reads GGAGVGKT.

Belongs to the ATPase alpha/beta chains family. In terms of assembly, F-type ATPases have 2 components, CF(1) - the catalytic core - and CF(0) - the membrane proton channel. CF(1) has five subunits: alpha(3), beta(3), gamma(1), delta(1), epsilon(1). CF(0) has four main subunits: a(1), b(1), b'(1) and c(9-12).

It is found in the plastid membrane. It catalyses the reaction ATP + H2O + 4 H(+)(in) = ADP + phosphate + 5 H(+)(out). Produces ATP from ADP in the presence of a proton gradient across the membrane. The catalytic sites are hosted primarily by the beta subunits. The protein is ATP synthase subunit beta, plastid (atpB) of Cuscuta japonica (Japanese dodder).